Here is an 891-residue protein sequence, read N- to C-terminus: Protein translocase subunit SecA 1 (891 aa).

Residues Gln-85, 103–107, and Asp-491 contribute to the ATP site; that span reads GEGKT. Positions 877, 879, 888, and 889 each coordinate Zn(2+).

Belongs to the SecA family. As to quaternary structure, monomer and homodimer. Part of the essential Sec protein translocation apparatus which comprises SecA, SecYEG and auxiliary proteins SecDF. Other proteins may also be involved. The cofactor is Zn(2+).

It is found in the cell membrane. The protein resides in the cytoplasm. It carries out the reaction ATP + H2O + cellular proteinSide 1 = ADP + phosphate + cellular proteinSide 2.. Functionally, part of the Sec protein translocase complex. Interacts with the SecYEG preprotein conducting channel. Has a central role in coupling the hydrolysis of ATP to the transfer of proteins into and across the cell membrane, serving as an ATP-driven molecular motor driving the stepwise translocation of polypeptide chains across the membrane. This is Protein translocase subunit SecA 1 from Clostridioides difficile (strain 630) (Peptoclostridium difficile).